The sequence spans 166 residues: Transcription antitermination protein NusB (166 aa).

The protein belongs to the NusB family.

Involved in transcription antitermination. Required for transcription of ribosomal RNA (rRNA) genes. Binds specifically to the boxA antiterminator sequence of the ribosomal RNA (rrn) operons. The polypeptide is Transcription antitermination protein NusB (Chromohalobacter salexigens (strain ATCC BAA-138 / DSM 3043 / CIP 106854 / NCIMB 13768 / 1H11)).